The chain runs to 185 residues: Elongation factor P (185 aa).

Belongs to the elongation factor P family.

The protein localises to the cytoplasm. It participates in protein biosynthesis; polypeptide chain elongation. Functionally, involved in peptide bond synthesis. Stimulates efficient translation and peptide-bond synthesis on native or reconstituted 70S ribosomes in vitro. Probably functions indirectly by altering the affinity of the ribosome for aminoacyl-tRNA, thus increasing their reactivity as acceptors for peptidyl transferase. This Bacillus pumilus (strain SAFR-032) protein is Elongation factor P.